A 131-amino-acid chain; its full sequence is Mesogenin-1 (131 aa).

Residues E22–E79 form a disordered region. Low complexity predominate over residues G27–P45. The segment covering P63–M73 has biased composition (basic residues). One can recognise a bHLH domain in the interval R70 to L124.

In terms of tissue distribution, coexpression of ntl and spt is required for expression.

It is found in the nucleus. In terms of biological role, involved in specifying the paraxial, but not dorsal, mesoderm. May regulate the expression of T-box transcription factors required for mesoderm formation and differentiation. The polypeptide is Mesogenin-1 (msgn1) (Danio rerio (Zebrafish)).